The chain runs to 240 residues: Phosphatidylserine decarboxylase proenzyme (240 aa).

The active-site Schiff-base intermediate with substrate; via pyruvic acid is serine 209. Position 209 is a pyruvic acid (Ser); by autocatalysis (serine 209).

The protein belongs to the phosphatidylserine decarboxylase family. PSD-A subfamily. Heterodimer of a large membrane-associated beta subunit and a small pyruvoyl-containing alpha subunit. Pyruvate is required as a cofactor. Is synthesized initially as an inactive proenzyme. Formation of the active enzyme involves a self-maturation process in which the active site pyruvoyl group is generated from an internal serine residue via an autocatalytic post-translational modification. Two non-identical subunits are generated from the proenzyme in this reaction, and the pyruvate is formed at the N-terminus of the alpha chain, which is derived from the carboxyl end of the proenzyme. The post-translation cleavage follows an unusual pathway, termed non-hydrolytic serinolysis, in which the side chain hydroxyl group of the serine supplies its oxygen atom to form the C-terminus of the beta chain, while the remainder of the serine residue undergoes an oxidative deamination to produce ammonia and the pyruvoyl prosthetic group on the alpha chain.

The protein resides in the cell membrane. The catalysed reaction is a 1,2-diacyl-sn-glycero-3-phospho-L-serine + H(+) = a 1,2-diacyl-sn-glycero-3-phosphoethanolamine + CO2. It functions in the pathway phospholipid metabolism; phosphatidylethanolamine biosynthesis; phosphatidylethanolamine from CDP-diacylglycerol: step 2/2. In terms of biological role, catalyzes the formation of phosphatidylethanolamine (PtdEtn) from phosphatidylserine (PtdSer). The protein is Phosphatidylserine decarboxylase proenzyme of Mycobacterium ulcerans (strain Agy99).